The primary structure comprises 642 residues: DNA gyrase subunit B (642 aa).

A Toprim domain is found at 422 to 536 (CELFIVEGDS…AGYVYIAQPP (115 aa)). Mg(2+) is bound by residues glutamate 428, aspartate 501, and aspartate 503.

It belongs to the type II topoisomerase family. As to quaternary structure, heterotetramer, composed of two GyrA and two GyrB chains. Within the heterotetramer, GyrA contains the active site tyrosine that forms a covalent intermediate with the DNA, while GyrB contributes the cofactor binding sites and catalyzes ATP hydrolysis. Mg(2+) serves as cofactor. It depends on Mn(2+) as a cofactor. The cofactor is Ca(2+).

Its subcellular location is the cytoplasm. It carries out the reaction ATP-dependent breakage, passage and rejoining of double-stranded DNA.. Pyrrolopyrimidines inhibit both GyrB and its paralog in topoisomerase IV (parE). In terms of biological role, DNA gyrase negatively supercoils closed circular double-stranded DNA in an ATP-dependent manner and also catalyzes the interconversion of other topological isomers of double-stranded DNA rings, including catenanes and knotted rings. This is DNA gyrase subunit B from Enterococcus faecalis (strain ATCC 700802 / V583).